The chain runs to 105 residues: BLOC-1-related complex subunit 7 (105 aa).

The protein belongs to the BORCS7 family. In terms of assembly, component of the BLOC-one-related complex (BORC) which is composed of BLOC1S1, BLOC1S2, BORCS5, BORCS6, BORCS7, BORCS8, KXD1 and SNAPIN.

It is found in the lysosome membrane. As part of the BORC complex may play a role in lysosomes movement and localization at the cell periphery. Associated with the cytosolic face of lysosomes, the BORC complex may recruit ARL8B and couple lysosomes to microtubule plus-end-directed kinesin motor. This Bos taurus (Bovine) protein is BLOC-1-related complex subunit 7.